We begin with the raw amino-acid sequence, 541 residues long: Chaperonin GroEL (541 aa).

ATP-binding positions include 29-32 (TLGP), 86-90 (DGTTT), Gly-413, 476-478 (NAA), and Asp-492.

The protein belongs to the chaperonin (HSP60) family. In terms of assembly, forms a cylinder of 14 subunits composed of two heptameric rings stacked back-to-back. Interacts with the co-chaperonin GroES.

It is found in the cytoplasm. It catalyses the reaction ATP + H2O + a folded polypeptide = ADP + phosphate + an unfolded polypeptide.. Together with its co-chaperonin GroES, plays an essential role in assisting protein folding. The GroEL-GroES system forms a nano-cage that allows encapsulation of the non-native substrate proteins and provides a physical environment optimized to promote and accelerate protein folding. This chain is Chaperonin GroEL, found in Streptococcus equi subsp. zooepidemicus (strain H70).